Reading from the N-terminus, the 83-residue chain is Short neurotoxin OKI-Ed (83 aa).

Residues 1-21 (MKTLLLTLVVVTIVCLDLGYT) form the signal peptide. 4 cysteine pairs are disulfide-bonded: cysteine 24–cysteine 45, cysteine 38–cysteine 62, cysteine 64–cysteine 75, and cysteine 76–cysteine 81.

Belongs to the three-finger toxin family. Short-chain subfamily. Type I alpha-neurotoxin sub-subfamily. As to expression, expressed by the venom gland.

The protein resides in the secreted. Binds to muscle nicotinic acetylcholine receptor (nAChR) and inhibit acetylcholine from binding to the receptor, thereby impairing neuromuscular transmission. The protein is Short neurotoxin OKI-Ed of Laticauda semifasciata (Black-banded sea krait).